Consider the following 474-residue polypeptide: tRNA-2-methylthio-N(6)-dimethylallyladenosine synthase (474 aa).

In terms of domain architecture, MTTase N-terminal spans 3–120 (KKLHIKTWGC…LPEMINSVRG (118 aa)). The [4Fe-4S] cluster site is built by Cys-12, Cys-49, Cys-83, Cys-157, Cys-161, and Cys-164. The Radical SAM core domain maps to 143-375 (RADGPTAFVS…QDRINQQTTA (233 aa)). The TRAM domain maps to 378 to 441 (RRKLGTVQRI…ANSLRGMLLR (64 aa)).

The protein belongs to the methylthiotransferase family. MiaB subfamily. Monomer. It depends on [4Fe-4S] cluster as a cofactor.

It is found in the cytoplasm. The enzyme catalyses N(6)-dimethylallyladenosine(37) in tRNA + (sulfur carrier)-SH + AH2 + 2 S-adenosyl-L-methionine = 2-methylsulfanyl-N(6)-dimethylallyladenosine(37) in tRNA + (sulfur carrier)-H + 5'-deoxyadenosine + L-methionine + A + S-adenosyl-L-homocysteine + 2 H(+). Its function is as follows. Catalyzes the methylthiolation of N6-(dimethylallyl)adenosine (i(6)A), leading to the formation of 2-methylthio-N6-(dimethylallyl)adenosine (ms(2)i(6)A) at position 37 in tRNAs that read codons beginning with uridine. In Erwinia tasmaniensis (strain DSM 17950 / CFBP 7177 / CIP 109463 / NCPPB 4357 / Et1/99), this protein is tRNA-2-methylthio-N(6)-dimethylallyladenosine synthase.